The sequence spans 221 residues: Transmembrane protein 225B (221 aa).

The next 4 membrane-spanning stretches occupy residues 14 to 34 (WAIV…VSIF), 77 to 97 (VFLL…MPFA), 109 to 129 (FVLA…LVLH), and 147 to 167 (VLWP…AGTI).

Its subcellular location is the membrane. This Homo sapiens (Human) protein is Transmembrane protein 225B.